The primary structure comprises 311 residues: 4-hydroxy-tetrahydrodipicolinate synthase (311 aa).

Position 51 (Thr-51) interacts with pyruvate. The Proton donor/acceptor role is filled by Tyr-140. Lys-168 serves as the catalytic Schiff-base intermediate with substrate. Ile-209 contacts pyruvate.

It belongs to the DapA family. In terms of assembly, homotetramer; dimer of dimers.

The protein localises to the cytoplasm. The catalysed reaction is L-aspartate 4-semialdehyde + pyruvate = (2S,4S)-4-hydroxy-2,3,4,5-tetrahydrodipicolinate + H2O + H(+). Its pathway is amino-acid biosynthesis; L-lysine biosynthesis via DAP pathway; (S)-tetrahydrodipicolinate from L-aspartate: step 3/4. In terms of biological role, catalyzes the condensation of (S)-aspartate-beta-semialdehyde [(S)-ASA] and pyruvate to 4-hydroxy-tetrahydrodipicolinate (HTPA). The chain is 4-hydroxy-tetrahydrodipicolinate synthase from Streptococcus gordonii (strain Challis / ATCC 35105 / BCRC 15272 / CH1 / DL1 / V288).